Consider the following 148-residue polypeptide: Caltractin (148 aa).

EF-hand domains follow at residues 4–39 (EQKQDIREAFDLFDTDGSGTIDAKELKVAMRALGFE), 40–75 (PKKEEIKKMIADIDKDGSGTIDFEEFLQMMTAKMGE), 77–112 (DSREEIMKAFRLFDDDETGKISFKNLKRVAKELGEN), and 113–148 (MTDEELQEMIDEADRDGDGEVNEEEFFRIMKKTSLF). Residues D17, D19, S21, T23, E28, D53, D55, S57, T59, and E64 each contribute to the Ca(2+) site. Positions 126, 128, 130, 132, and 137 each coordinate Ca(2+).

It belongs to the centrin family. In terms of tissue distribution, ubiquitous.

Its function is as follows. This calcium-binding protein is found in the basal body complexes (the functional homolog of the centrosome in animal cell). In mitotic cells it is specifically associated with the poles of the mitotic spindles at the sites of the duplicated basal body complexes. The protein is Caltractin of Tetraselmis striata (Green microalga).